A 179-amino-acid polypeptide reads, in one-letter code: MAKLHDYYRDQVVSELKNKFGYKSVMQVPRIEKITLNMGVGEALTDKKLLDNAVADLAAISGQKPLVTKARKSVAGFKIRQGYPIGCKVTLRGERMWEFFERLITIAVPRIRDFRGLSAKSFDGRGNYSMGVREQIIFPEIDYDKVDRVRGLDITITTTAKNDEEGQALLAAFNFPFRK.

It belongs to the universal ribosomal protein uL5 family. Part of the 50S ribosomal subunit; part of the 5S rRNA/L5/L18/L25 subcomplex. Contacts the 5S rRNA and the P site tRNA. Forms a bridge to the 30S subunit in the 70S ribosome.

Its function is as follows. This is one of the proteins that bind and probably mediate the attachment of the 5S RNA into the large ribosomal subunit, where it forms part of the central protuberance. In the 70S ribosome it contacts protein S13 of the 30S subunit (bridge B1b), connecting the 2 subunits; this bridge is implicated in subunit movement. Contacts the P site tRNA; the 5S rRNA and some of its associated proteins might help stabilize positioning of ribosome-bound tRNAs. The protein is Large ribosomal subunit protein uL5 of Haemophilus influenzae (strain 86-028NP).